The sequence spans 291 residues: Quinol oxidase subunit 2 (291 aa).

An N-terminal signal peptide occupies residues 1-28 (MQLKKAFWKLASLLPXSLLLFLGGCDKK). A run of 2 helical transmembrane segments spans residues 49-69 (SFLL…VILI) and 91-111 (LEII…IPTV).

This sequence belongs to the cytochrome c oxidase subunit 2 family.

Its subcellular location is the cell membrane. It catalyses the reaction 2 a quinol + O2 = 2 a quinone + 2 H2O. In terms of biological role, catalyzes quinol oxidation with the concomitant reduction of oxygen to water. Subunit II transfers the electrons from a quinol to the binuclear center of the catalytic subunit I. The sequence is that of Quinol oxidase subunit 2 from Bacillus cereus (strain ATCC 10987 / NRS 248).